A 190-amino-acid chain; its full sequence is PBP1-interacting protein LSM12 (190 aa).

Residues 2–69 (PVCNNDSQLI…IKEVTALRDN (68 aa)) form the Sm domain. Residues 84–190 (PSMQAARDRS…ERVQKTLSKK (107 aa)) enclose the AD domain.

This sequence belongs to the LSM12 family. As to quaternary structure, forms a complex composed of at least MKT1, PBP1, XAC1 and LSM12. Forms a complex composed of at least MKT1L, PBP1, XAC1 and LSM12. Within the complex, interacts with PBP1; the interaction is direct.

Functionally, involved in post-transcriptional regulation of gene expression. The sequence is that of PBP1-interacting protein LSM12 from Trypanosoma brucei brucei (strain 927/4 GUTat10.1).